Here is a 521-residue protein sequence, read N- to C-terminus: Vang-like protein 2 (521 aa).

The segment at 1-81 (MDTESQYSGY…TTVVTGTSEH (81 aa)) is disordered. At 1–108 (MDTESQYSGY…VPLDCSRHLG (108 aa)) the chain is on the cytoplasmic side. Positions 15–33 (GHSRSSRKHRDRRDRHRSK) are enriched in basic residues. The span at 57 to 67 (ESTRGDERDDN) shows a compositional bias: basic and acidic residues. A compositionally biased stretch (low complexity) spans 69–81 (GETTTVVTGTSEH). The helical transmembrane segment at 109–129 (VAAGATLALLSFLTPLAFLLL) threads the bilayer. Topologically, residues 130–147 (PPLLWREELEPCGTACEG) are extracellular. A helical transmembrane segment spans residues 148–168 (LFISVAFKLLILLLGSWALFF). At 169–178 (RRPKASLPRV) the chain is on the cytoplasmic side. The chain crosses the membrane as a helical span at residues 179 to 199 (FVLRALLMVLVFLLVVSYWLF). Residues 200 to 217 (YGVRILDARERSYQGVVQ) lie on the Extracellular side of the membrane. The helical transmembrane segment at 218-238 (FAVSLVDALLFVHYLAVVLLE) threads the bilayer. The Cytoplasmic segment spans residues 239-521 (LRQLQPQFTL…VMRLQSETSV (283 aa)).

The protein belongs to the Vang family. Homodimer and heterodimer with VANGL1. Interacts through its C-terminal region with the N-terminal half of DVL1, DVL2 and DVL3. The PDZ domain of DVL1, DVL2 and DVL3 is required for the interaction. Also interacts with the PDZ domains of MAGI3, SCRIB/SCRB1 and FZD3. Interacts with PRICKLE3.

It localises to the cell membrane. Its function is as follows. Involved in the control of early morphogenesis and patterning of both axial midline structures and the development of neural plate. Plays a role in the regulation of planar cell polarity, particularly in the orientation of stereociliary bundles in the cochlea. Required for polarization and movement of myocardializing cells in the outflow tract and seems to act via RHOA signaling to regulate this process. Required for cell surface localization of FZD3 and FZD6 in the inner ear. This chain is Vang-like protein 2 (VANGL2), found in Homo sapiens (Human).